A 225-amino-acid chain; its full sequence is pH-response regulator palI/RIM9 homolog 2 (225 aa).

Over 1–4 the chain is Cytoplasmic; the sequence is MLVK. A helical transmembrane segment spans residues 5–25; the sequence is IVLVVLLTLALVFECFSTISV. Over 26-87 the chain is Extracellular; sequence PITIGLYISE…PNHAKYALSN (62 aa). The chain crosses the membrane as a helical span at residues 88–108; sequence LLLVHVLAFVCVTILWVFGML. At 109–120 the chain is on the cytoplasmic side; sequence TCFRCIKTSRRM. A helical transmembrane segment spans residues 121-141; the sequence is LIIAVLWSMLTFMVTLLGFLI. Residues 142-153 are Extracellular-facing; it reads DILIFSSHVTWC. The helical transmembrane segment at 154–174 threads the bilayer; it reads TWLTLASAFFTVLSGTVLCVM. Residues 175–225 are Cytoplasmic-facing; sequence RRNLTYDKFLESKPEKHGVYVPLCRLNDVEELEIPWCNTMNHQALTAPTPM.

The protein belongs to the palI/RIM9 family.

It is found in the cell membrane. Required for the proteolytic cleavage of the transcription factor RIM101 in response to alkaline ambient pH. This chain is pH-response regulator palI/RIM9 homolog 2, found in Kluyveromyces lactis (strain ATCC 8585 / CBS 2359 / DSM 70799 / NBRC 1267 / NRRL Y-1140 / WM37) (Yeast).